Consider the following 302-residue polypeptide: Protease HtpX homolog (302 aa).

A helical membrane pass occupies residues 27–47; it reads LLMAIGGIIGGTAGMLIALII. H141 is a binding site for Zn(2+). The active site involves E142. H145 lines the Zn(2+) pocket. 2 helical membrane-spanning segments follow: residues 151–171 and 195–215; these read VLVA…ANMA and IGAI…QLAI. A Zn(2+)-binding site is contributed by E220.

It belongs to the peptidase M48B family. The cofactor is Zn(2+).

Its subcellular location is the cell inner membrane. The polypeptide is Protease HtpX homolog (Aquifex aeolicus (strain VF5)).